We begin with the raw amino-acid sequence, 168 residues long: Auxin-responsive protein IAA1 (168 aa).

Residues 1–74 form a disordered region; the sequence is MEVTNGLNLK…NRKNNNNKNV (74 aa). The EAR-like (transcriptional repression) signature appears at 14 to 18; sequence LRLGL. A compositionally biased stretch (polar residues) spans 23 to 34; that stretch reads EEQQLELSCVRS. In terms of domain architecture, PB1 spans 74-161; it reads VSYVKVSMDG…SCQKLRIMKG (88 aa).

Belongs to the Aux/IAA family. In terms of assembly, homodimers and heterodimers. Interacts with the auxin-responsive protein IAA2. Interacts with TPL. Phosphorylated by phytochrome A in vitro. In terms of tissue distribution, preferentially expressed in stems, leaves and flowers.

The protein localises to the nucleus. Its function is as follows. Aux/IAA proteins are short-lived transcriptional factors that function as repressors of early auxin response genes at low auxin concentrations. Repression is thought to result from the interaction with auxin response factors (ARFs), proteins that bind to the auxin-responsive promoter element (AuxRE). Formation of heterodimers with ARF proteins may alter their ability to modulate early auxin response genes expression. This Arabidopsis thaliana (Mouse-ear cress) protein is Auxin-responsive protein IAA1 (IAA1).